Reading from the N-terminus, the 367-residue chain is MNPVQQPAQHRSPASLLHLPHPKRAQEAPDMGLYCDNFMFSQQNLHPSQRAPNFSIGGEFTPPANPYLWLGGPGMNNAPNYSPAPAPYIPSAFSAPQRHFMANSAAFGGADLGWMSAASQEELLKMVRPPYSYSALIAMAIQNASDKRLTLSQIYQYVAENFPFYKKSKAGWQNSIRHNLSLNDCFKKMPRDENDPGKGNYWTLDSNCEKMFDNGNFRRKRKPKSESNNAKIAKRDEDHLNPKGKESPPMITPSSSPEVLSPTGHSKSPSPPTVTYTPCLTNFIGSMTAVDSATMNRQSPLGLLNELSQRNITGLSSFISGSAVDQSSEHQDNSLFYNRSPYYTNQKQPHFLQQLHPQQPPLYQGRY.

2 disordered regions span residues 1–21 (MNPVQQPAQHRSPASLLHLPH) and 213–274 (DNGN…PPTV). Positions 128–222 (RPPYSYSALI…DNGNFRRKRK (95 aa)) form a DNA-binding region, fork-head. Residues 233–246 (AKRDEDHLNPKGKE) show a composition bias toward basic and acidic residues. A compositionally biased stretch (polar residues) spans 252–274 (TPSSSPEVLSPTGHSKSPSPPTV).

Initially localized to the animal hemisphere (the presumptive ectoderm) of early-mid blastula embryos. Becomes restricted to head placodes, excluding the otic placodes, by the tailbud stages.

Its subcellular location is the nucleus. Transcription factor. Essential for ventral specification of the early cephalic (head) ectoderm during gastrulation, playing a role in the 'non-neural' versus 'neural' cell fate choice. Binds to DNA via the target sequence 5'-[AG]TAAA[CT]A-3', with 5'-ATAAACA-3' being the preferred binding site. The chain is Forkhead box protein I1-B (foxi1-b) from Xenopus laevis (African clawed frog).